We begin with the raw amino-acid sequence, 143 residues long: Transcription antitermination protein NusB (143 aa).

This sequence belongs to the NusB family.

Involved in transcription antitermination. Required for transcription of ribosomal RNA (rRNA) genes. Binds specifically to the boxA antiterminator sequence of the ribosomal RNA (rrn) operons. In Dehalococcoides mccartyi (strain CBDB1), this protein is Transcription antitermination protein NusB.